The following is a 439-amino-acid chain: MSYFDINKVNYEGPKSNNAFSFKYYNPEEKLGNHSMSELLRFSVAYWHTFTADLSDPFGVGVAERDWDSLDEMEKAKARVEAIFEFMEKTRIDYFCFHDVDISPEGASLKESNENLDIIVELIKEKMDQTGKKLLWNTTNNFTHERFVHGAATSSNAEVFAYAAAKVKKSLEIAKKLGSENFVFWGGREGYESLLNTNMKLELDNLATFFKMAKSYADEIGYTGQFLIEPKPKEPTTHQYDTDVATAHAFLQKYDLDKDFKFNIEANHATLAGHTFQHELRYARDNNMLGSVDANQGHPLLGWDTDESTDVYDTTLAMYEILKNGGLAPGGLNFDAKPRRTSFKQEDLILTHIAGMDTFALGLRVAYKMIEDNFFENIMDEKYKSFNEGIGKKIVEGETSLKELEDYAFNINTINNTSDHLEVIKSQINQYILNINNKD.

Residues histidine 98 and aspartate 101 contribute to the active site. Mg(2+)-binding residues include glutamate 229, glutamate 265, histidine 268, aspartate 293, aspartate 304, aspartate 306, and aspartate 335.

This sequence belongs to the xylose isomerase family. Homotetramer. Requires Mg(2+) as cofactor.

It is found in the cytoplasm. The catalysed reaction is alpha-D-xylose = alpha-D-xylulofuranose. Its function is as follows. Involved in D-xylose catabolism. This Staphylococcus xylosus protein is Xylose isomerase (xylA).